Here is a 176-residue protein sequence, read N- to C-terminus: Prepronociceptin (176 aa).

A signal peptide spans 1–19; that stretch reads MKVLLCDLLLLSLFSSVFS. 2 propeptides span residues 20–95 and 169–176; these read SCQR…MQHL and TLHQNGNV.

Belongs to the opioid neuropeptide precursor family. Specific enzymatic cleavages at paired basic residues probably yield other active peptides besides nociceptin. In terms of processing, the N-terminal domain contains 6 conserved cysteines thought to be involved in disulfide bonding and/or processing. As to expression, predominantly expressed in the brain and spinal cord. Also expressed and secreted by peripheral blood neutrophils following degranulation.

Its subcellular location is the secreted. Its function is as follows. Ligand of the opioid receptor-like receptor OPRL1. It may act as a transmitter in the brain by modulating nociceptive and locomotor behavior. May be involved in neuronal differentiation and development. In terms of biological role, blocks nociceptin action in pain transmission by inhibiting nociceptin-induced hyperalgesia and allodynia. Functionally, has potent analgesic activity. In Homo sapiens (Human), this protein is Prepronociceptin (PNOC).